Reading from the N-terminus, the 509-residue chain is Membrane-bound lytic murein transglycosylase F (509 aa).

An N-terminal signal peptide occupies residues 1 to 40 (MLASACTHSWRTGRFLNRIIKSSVQTLTAAALIANLSACS). Residues 41–280 (RPTTLEKIEQ…YLQERYFGHV (240 aa)) form a non-LT domain region. The tract at residues 281–509 (NQLNYVGART…APFRVTPPML (229 aa)) is LT domain. Glu327 is an active-site residue. The interval 474–500 (DGSVAQNEDAPTTGADGTTEETPAIPA) is disordered.

The protein in the N-terminal section; belongs to the bacterial solute-binding protein 3 family. It in the C-terminal section; belongs to the transglycosylase Slt family.

The protein localises to the cell outer membrane. It carries out the reaction Exolytic cleavage of the (1-&gt;4)-beta-glycosidic linkage between N-acetylmuramic acid (MurNAc) and N-acetylglucosamine (GlcNAc) residues in peptidoglycan, from either the reducing or the non-reducing ends of the peptidoglycan chains, with concomitant formation of a 1,6-anhydrobond in the MurNAc residue.. In terms of biological role, murein-degrading enzyme that degrades murein glycan strands and insoluble, high-molecular weight murein sacculi, with the concomitant formation of a 1,6-anhydromuramoyl product. Lytic transglycosylases (LTs) play an integral role in the metabolism of the peptidoglycan (PG) sacculus. Their lytic action creates space within the PG sacculus to allow for its expansion as well as for the insertion of various structures such as secretion systems and flagella. This Hahella chejuensis (strain KCTC 2396) protein is Membrane-bound lytic murein transglycosylase F.